The following is a 129-amino-acid chain: S-adenosylmethionine decarboxylase proenzyme (129 aa).

The active-site Schiff-base intermediate with substrate; via pyruvic acid is the S63. Residue S63 is modified to Pyruvic acid (Ser); by autocatalysis. The active-site Proton acceptor; for processing activity is H68. The Proton donor; for catalytic activity role is filled by C83.

This sequence belongs to the prokaryotic AdoMetDC family. Type 1 subfamily. Heterotetramer of two alpha and two beta chains arranged as a dimer of alpha/beta heterodimers. Requires pyruvate as cofactor. In terms of processing, is synthesized initially as an inactive proenzyme. Formation of the active enzyme involves a self-maturation process in which the active site pyruvoyl group is generated from an internal serine residue via an autocatalytic post-translational modification. Two non-identical subunits are generated from the proenzyme in this reaction, and the pyruvate is formed at the N-terminus of the alpha chain, which is derived from the carboxyl end of the proenzyme. The post-translation cleavage follows an unusual pathway, termed non-hydrolytic serinolysis, in which the side chain hydroxyl group of the serine supplies its oxygen atom to form the C-terminus of the beta chain, while the remainder of the serine residue undergoes an oxidative deamination to produce ammonia and the pyruvoyl group blocking the N-terminus of the alpha chain.

It carries out the reaction S-adenosyl-L-methionine + H(+) = S-adenosyl 3-(methylsulfanyl)propylamine + CO2. It functions in the pathway amine and polyamine biosynthesis; S-adenosylmethioninamine biosynthesis; S-adenosylmethioninamine from S-adenosyl-L-methionine: step 1/1. Catalyzes the decarboxylation of S-adenosylmethionine to S-adenosylmethioninamine (dcAdoMet), the propylamine donor required for the synthesis of the polyamines spermine and spermidine from the diamine putrescine. The polypeptide is S-adenosylmethionine decarboxylase proenzyme (Shouchella clausii (strain KSM-K16) (Alkalihalobacillus clausii)).